Here is a 37-residue protein sequence, read N- to C-terminus: Potassium channel toxin alpha-KTx 11.2 (37 aa).

3 cysteine pairs are disulfide-bonded: cysteine 8-cysteine 27, cysteine 13-cysteine 33, and cysteine 17-cysteine 35.

It belongs to the short scorpion toxin superfamily. Potassium channel inhibitor family. Alpha-KTx 11 subfamily. In terms of tissue distribution, expressed by the venom gland.

The protein resides in the secreted. In terms of biological role, binds and inhibits voltage-sensitive potassium channels. Inhibits the vertebrate potassium channel Kv1.1/KCNA1 with low affinity. This is Potassium channel toxin alpha-KTx 11.2 from Parabuthus villosus (Black hairy thick-tailed scorpion).